Reading from the N-terminus, the 330-residue chain is Putative 1-aminocyclopropane-1-carboxylate deaminase (330 aa).

Position 54 is an N6-(pyridoxal phosphate)lysine (Lys-54).

It belongs to the ACC deaminase/D-cysteine desulfhydrase family. Pyridoxal 5'-phosphate is required as a cofactor.

It catalyses the reaction 1-aminocyclopropane-1-carboxylate + H2O = 2-oxobutanoate + NH4(+). The sequence is that of Putative 1-aminocyclopropane-1-carboxylate deaminase from Pyrococcus abyssi (strain GE5 / Orsay).